Here is a 118-residue protein sequence, read N- to C-terminus: Ribonuclease P protein component (118 aa).

This sequence belongs to the RnpA family. In terms of assembly, consists of a catalytic RNA component (M1 or rnpB) and a protein subunit.

It catalyses the reaction Endonucleolytic cleavage of RNA, removing 5'-extranucleotides from tRNA precursor.. RNaseP catalyzes the removal of the 5'-leader sequence from pre-tRNA to produce the mature 5'-terminus. It can also cleave other RNA substrates such as 4.5S RNA. The protein component plays an auxiliary but essential role in vivo by binding to the 5'-leader sequence and broadening the substrate specificity of the ribozyme. The protein is Ribonuclease P protein component of Ureaplasma urealyticum serovar 10 (strain ATCC 33699 / Western).